We begin with the raw amino-acid sequence, 343 residues long: Arginine-hydroxylase NDUFAF5, mitochondrial (343 aa).

The N-terminal 29 residues, 1–29, are a transit peptide targeting the mitochondrion; that stretch reads MLRRVVLSRLYARLGGPAVSAGRGGRRGV. Residues 18–40 form a disordered region; the sequence is AVSAGRGGRRGVASSVPPSGSTS.

This sequence belongs to the methyltransferase superfamily. Interacts with NDUFAF8, leading to stabilize NDUFAF5. Interacts with NDUFS7. Interacts with PYURF (via TRM112 domain); the interaction is direct and stabilizes NDUFAF5 protein.

The protein localises to the mitochondrion inner membrane. Functionally, arginine hydroxylase that mediates hydroxylation of 'Arg-111' of NDUFS7 and is involved in the assembly of mitochondrial NADH:ubiquinone oxidoreductase complex (complex I, MT-ND1) at early stages. May also have methyltransferase activity. This Rattus norvegicus (Rat) protein is Arginine-hydroxylase NDUFAF5, mitochondrial.